A 249-amino-acid chain; its full sequence is UDP-N-acetyl-D-mannosaminuronic acid transferase (249 aa).

It belongs to the glycosyltransferase 26 family.

It carries out the reaction UDP-N-acetyl-alpha-D-mannosaminouronate + N-acetyl-alpha-D-glucosaminyl-di-trans,octa-cis-undecaprenyl diphosphate = beta-D-ManNAcA-(1-&gt;4)-alpha-D-GlcNAc-di-trans,octa-cis-undecaprenyl diphosphate + UDP + H(+). The protein operates within bacterial outer membrane biogenesis; enterobacterial common antigen biosynthesis. Functionally, catalyzes the synthesis of Und-PP-GlcNAc-ManNAcA (Lipid II), the second lipid-linked intermediate involved in enterobacterial common antigen (ECA) synthesis. This is UDP-N-acetyl-D-mannosaminuronic acid transferase from Pectobacterium carotovorum subsp. carotovorum (strain PC1).